A 257-amino-acid polypeptide reads, in one-letter code: tRNA (guanine-N(7)-)-methyltransferase (257 aa).

Residues 1 to 58 (MQPIEQPGTGPDDITPESQDTNTAESAESGAETGHPRRIRSFVRRAGRTSTGQQRAIN) are disordered. Positions 16–26 (PESQDTNTAES) are enriched in polar residues. A compositionally biased stretch (basic residues) spans 36–47 (PRRIRSFVRRAG). S-adenosyl-L-methionine contacts are provided by E89, E114, D141, and D164. The active site involves D164. K168 is a substrate binding site. Residues 170–175 (RHNKRR) are interaction with RNA. Residues D200 and 235–238 (TKFE) each bind substrate.

The protein belongs to the class I-like SAM-binding methyltransferase superfamily. TrmB family.

It carries out the reaction guanosine(46) in tRNA + S-adenosyl-L-methionine = N(7)-methylguanosine(46) in tRNA + S-adenosyl-L-homocysteine. It participates in tRNA modification; N(7)-methylguanine-tRNA biosynthesis. Catalyzes the formation of N(7)-methylguanine at position 46 (m7G46) in tRNA. In Ralstonia pickettii (strain 12J), this protein is tRNA (guanine-N(7)-)-methyltransferase.